The following is a 206-amino-acid chain: Oligoribonuclease (206 aa).

The region spanning 20–183 (LVWLDMEMTG…ADIHESIDEL (164 aa)) is the Exonuclease domain. Residue Tyr-141 is part of the active site.

This sequence belongs to the oligoribonuclease family.

Its subcellular location is the cytoplasm. In terms of biological role, 3'-to-5' exoribonuclease specific for small oligoribonucleotides. In Burkholderia ambifaria (strain ATCC BAA-244 / DSM 16087 / CCUG 44356 / LMG 19182 / AMMD) (Burkholderia cepacia (strain AMMD)), this protein is Oligoribonuclease.